Reading from the N-terminus, the 268-residue chain is Hemin import ATP-binding protein HmuV (268 aa).

One can recognise an ABC transporter domain in the interval Leu5–Ala241. Gly37–Ser44 provides a ligand contact to ATP.

It belongs to the ABC transporter superfamily. Heme (hemin) importer (TC 3.A.1.14.5) family. In terms of assembly, the complex is composed of two ATP-binding proteins (HmuV), two transmembrane proteins (HmuU) and a solute-binding protein (HmuT).

The protein resides in the cell inner membrane. Functionally, part of the ABC transporter complex HmuTUV involved in hemin import. Responsible for energy coupling to the transport system. This Rhodopseudomonas palustris (strain ATCC BAA-98 / CGA009) protein is Hemin import ATP-binding protein HmuV.